Here is a 377-residue protein sequence, read N- to C-terminus: MEIPEEPANSGHSLPPVYIYSPEYVSICDSLVKVPKRASMVHSLIEAYALHKQMRIVKPKVASMEEMATFHTDAYLQHLQKVSQEGDEDHPDSIEYGLGYDCPATEGIFDYAAAIGGGTITAAQCLIDGKCKVAINWSGGWHHAKKDEASGFCYLNDAVLGILRLRRKFDRILYVDLDLHHGDGVEDAFSFTSKVMTVSLHKFSPGFFPGTGDMSDVGLGKGRYYSVNVPIQDGIQDEKYYHICESVLKEVYQAFNPKAVVLQLGADTIAGDPMCSFNMTPVGIGKCLKYVLQWQLATLILGGGGYNLANTARCWTYLTGVILGKTLSSEIPDHEFFTAYGPDYVLEITPSCRPDRNEPHRIQQILNYIKGNLKHVV.

Positions 14–324 (LPPVYIYSPE…WTYLTGVILG (311 aa)) are histone deacetylase. S39 carries the post-translational modification Phosphoserine. Substrate is bound at residue D101. H143 serves as the catalytic Proton acceptor. G151 is a binding site for substrate. A divalent metal cation contacts are provided by D178, H180, and D267. A substrate-binding site is contributed by Y306.

The protein belongs to the histone deacetylase family. HD type 1 subfamily. In terms of assembly, interacts with CBFA2T3. Interacts with phosphorylated SMG5/EST1B; this interaction protects SMG5 from ubiquitin-mediated degradation. Associates with alpha-SMA (smooth muscle alpha-actin). It depends on a divalent metal cation as a cofactor. In terms of processing, phosphorylated by PKA on serine 39. Phosphorylation reduces deacetylase activity observed preferentially on histones H3 and H4.

The protein resides in the nucleus. It localises to the chromosome. It is found in the cytoplasm. It catalyses the reaction N(6)-acetyl-L-lysyl-[histone] + H2O = L-lysyl-[histone] + acetate. The catalysed reaction is N(6)-acetyl-L-lysyl-[protein] + H2O = L-lysyl-[protein] + acetate. It carries out the reaction N(6)-(2E)-butenoyl-L-lysyl-[protein] + H2O = (2E)-2-butenoate + L-lysyl-[protein]. Its activity is inhibited by trichostatin A (TSA) and butyrate, 2 well known histone deacetylase inhibitors. In terms of biological role, histone deacetylase that catalyzes the deacetylation of lysine residues on the N-terminal part of the core histones (H2A, H2B, H3 and H4). Histone deacetylation gives a tag for epigenetic repression and plays an important role in transcriptional regulation, cell cycle progression and developmental events. Histone deacetylases act via the formation of large multiprotein complexes. Also involved in the deacetylation of cohesin complex protein SMC3 regulating release of cohesin complexes from chromatin. May play a role in smooth muscle cell contractility. In addition to protein deacetylase activity, also has protein-lysine deacylase activity: acts as a protein decrotonylase by mediating decrotonylation ((2E)-butenoyl) of histones. This Rattus norvegicus (Rat) protein is Histone deacetylase 8 (Hdac8).